Here is a 630-residue protein sequence, read N- to C-terminus: tRNA uridine 5-carboxymethylaminomethyl modification enzyme MnmG (630 aa).

FAD is bound at residue 13–18 (GGGHAG). An NAD(+)-binding site is contributed by 273–287 (GPRYCPSIEDKVMRF).

Belongs to the MnmG family. In terms of assembly, homodimer. Heterotetramer of two MnmE and two MnmG subunits. The cofactor is FAD.

The protein resides in the cytoplasm. In terms of biological role, NAD-binding protein involved in the addition of a carboxymethylaminomethyl (cmnm) group at the wobble position (U34) of certain tRNAs, forming tRNA-cmnm(5)s(2)U34. In Actinobacillus pleuropneumoniae serotype 5b (strain L20), this protein is tRNA uridine 5-carboxymethylaminomethyl modification enzyme MnmG.